The primary structure comprises 238 residues: uncharacterized protein (238 aa).

Helical transmembrane passes span 19-39 (IVIEAFPGTGLVGSIAGFQII), 79-99 (IILFSDIIISPFKINGLAEFI), and 141-161 (YVEIFDFGVVGGMGGNLLIKC).

It is found in the cell membrane. This is an uncharacterized protein from Methanocaldococcus jannaschii (strain ATCC 43067 / DSM 2661 / JAL-1 / JCM 10045 / NBRC 100440) (Methanococcus jannaschii).